The sequence spans 368 residues: Ribosomal RNA large subunit methyltransferase M (368 aa).

S-adenosyl-L-methionine-binding positions include Ser189, 222-225, Asp241, Asp261, and Asp278; that span reads CPGG. Catalysis depends on Lys307, which acts as the Proton acceptor.

The protein belongs to the class I-like SAM-binding methyltransferase superfamily. RNA methyltransferase RlmE family. RlmM subfamily. In terms of assembly, monomer.

The protein resides in the cytoplasm. The catalysed reaction is cytidine(2498) in 23S rRNA + S-adenosyl-L-methionine = 2'-O-methylcytidine(2498) in 23S rRNA + S-adenosyl-L-homocysteine + H(+). Its function is as follows. Catalyzes the 2'-O-methylation at nucleotide C2498 in 23S rRNA. The chain is Ribosomal RNA large subunit methyltransferase M from Yersinia pestis bv. Antiqua (strain Angola).